The sequence spans 488 residues: Proline--tRNA ligase (488 aa).

Belongs to the class-II aminoacyl-tRNA synthetase family. ProS type 3 subfamily. In terms of assembly, homodimer.

The protein resides in the cytoplasm. The enzyme catalyses tRNA(Pro) + L-proline + ATP = L-prolyl-tRNA(Pro) + AMP + diphosphate. Its function is as follows. Catalyzes the attachment of proline to tRNA(Pro) in a two-step reaction: proline is first activated by ATP to form Pro-AMP and then transferred to the acceptor end of tRNA(Pro). This Pyrobaculum islandicum (strain DSM 4184 / JCM 9189 / GEO3) protein is Proline--tRNA ligase.